A 300-amino-acid polypeptide reads, in one-letter code: DDRGK domain-containing protein 1 (300 aa).

Topologically, residues 1-2 (MD) are lumenal. The chain crosses the membrane as a helical span at residues 3–23 (VVLYIAAAAILLVLIVFSVKI). The Cytoplasmic segment spans residues 24–300 (RGRTQDADVE…NLTPDIHSSA (277 aa)). The interval 28-173 (QDADVEDHQN…RVKEEQERRE (146 aa)) is disordered. Residues 78 to 90 (NEDSPVEADEDEE) show a composition bias toward acidic residues. Residues 112-173 (KLEEKQARKA…RVKEEQERRE (62 aa)) are compositionally biased toward basic and acidic residues. Residues 183–197 (SFIIEDQGEAEELTE) carry the UFM1-interacting motif (UFIM) motif. The region spanning 217–261 (VLLEDLASQFGLRTQDAIARLQDLIADGSLTGVIDDRGKFIFITP) is the PCI domain.

This sequence belongs to the DDRGK1 family. In terms of assembly, component of the UFM1 ribosome E3 ligase (UREL) complex, composed of ufl1, ddrgk1 and cdk5rap3.

It localises to the endoplasmic reticulum membrane. Its function is as follows. Component of the UFM1 ribosome E3 ligase (UREL) complex, a multiprotein complex that catalyzes ufmylation of endoplasmic reticulum-docked proteins. The UREL complex plays a key role in ribosome recycling by mediating mono-ufmylation of the RPL26/uL24 subunit of the 60S ribosome following ribosome dissociation: ufmylation weakens the junction between post-termination 60S subunits and SEC61 translocons, promoting release and recycling of the large ribosomal subunit from the endoplasmic reticulum membrane. Ufmylation of RPL26/uL24 and subsequent 60S ribosome recycling either take place after normal termination of translation or after ribosome stalling during cotranslational translocation at the endoplasmic reticulum. Within the UREL complex, DDRGK1 tethers the complex to the endoplasmic reticulum membrane to restrict its activity to endoplasmic reticulum-docked ribosomes and acts as an ufmylation 'reader': following RPL26/uL24 ufmylation, DDRGK1 specifically binds to ufmylated RPL26/uL24 via its UFIM motif, resulting in stable association between the 60S ribosome and the UREL complex, followed by dissociation of the 60S ribosome subunit from the endoplasmic reticulum membrane. The UREL complex is also involved in reticulophagy in response to endoplasmic reticulum stress by promoting ufmylation of proteins such as CYB5R3 and RPN1, thereby promoting lysosomal degradation of ufmylated proteins. Plays a role in cartilage development through sox9, inhibiting the ubiquitin-mediated proteasomal degradation of this transcriptional regulator. Required for stabilization and ufmylation of ATG9A. This is DDRGK domain-containing protein 1 from Danio rerio (Zebrafish).